The primary structure comprises 398 residues: Acetyl-CoA acetyltransferase erg10B, cytosolic (398 aa).

The active-site Acyl-thioester intermediate is C92. Y187 contacts K(+). CoA-binding residues include N229 and K232. Positions 249, 250, and 252 each coordinate K(+). S253 provides a ligand contact to CoA. V350 serves as a coordination point for K(+). Catalysis depends on proton acceptor residues H354 and C384. N385 serves as a coordination point for chloride.

The protein belongs to the thiolase-like superfamily. Thiolase family. In terms of assembly, homotetramer. K(+) serves as cofactor.

Its subcellular location is the cytoplasm. The protein resides in the cytosol. It carries out the reaction 2 acetyl-CoA = acetoacetyl-CoA + CoA. Its pathway is metabolic intermediate biosynthesis; (R)-mevalonate biosynthesis; (R)-mevalonate from acetyl-CoA: step 1/3. Its activity is regulated as follows. Activity is increased by monovalent cations such as K(+), Rb(+) or Cs(+). Its function is as follows. Acetyl-CoA acetyltransferase; part of the first module of ergosterol biosynthesis pathway that includes the early steps of the pathway, conserved across all eukaryotes, and which results in the formation of mevalonate from acetyl-coenzyme A (acetyl-CoA). In this module, the cytosolic acetyl-CoA acetyltransferase erg10B catalyzes the formation of acetoacetyl-CoA. The hydroxymethylglutaryl-CoA synthases AFUA_8G07210 and AFUA_3G10660 then condense acetyl-CoA with acetoacetyl-CoA to form HMG-CoA. The rate-limiting step of the early module is the reduction to mevalonate by the 3-hydroxy-3-methylglutaryl-coenzyme A (HMG-CoA) reductases hmg1 and hmg2. Mevalonate is also a precursor for the extracellular siderophore triacetylfusarinine C (TAFC). The polypeptide is Acetyl-CoA acetyltransferase erg10B, cytosolic (Aspergillus fumigatus (strain CBS 144.89 / FGSC A1163 / CEA10) (Neosartorya fumigata)).